We begin with the raw amino-acid sequence, 103 residues long: Large ribosomal subunit protein bL21 (103 aa).

It belongs to the bacterial ribosomal protein bL21 family. As to quaternary structure, part of the 50S ribosomal subunit. Contacts protein L20.

Functionally, this protein binds to 23S rRNA in the presence of protein L20. The polypeptide is Large ribosomal subunit protein bL21 (Treponema denticola (strain ATCC 35405 / DSM 14222 / CIP 103919 / JCM 8153 / KCTC 15104)).